The primary structure comprises 142 residues: Large ribosomal subunit protein uL11 (142 aa).

The protein belongs to the universal ribosomal protein uL11 family. Part of the ribosomal stalk of the 50S ribosomal subunit. Interacts with L10 and the large rRNA to form the base of the stalk. L10 forms an elongated spine to which L12 dimers bind in a sequential fashion forming a multimeric L10(L12)X complex. In terms of processing, one or more lysine residues are methylated.

Functionally, forms part of the ribosomal stalk which helps the ribosome interact with GTP-bound translation factors. In Bartonella quintana (strain Toulouse) (Rochalimaea quintana), this protein is Large ribosomal subunit protein uL11.